The following is a 2301-amino-acid chain: Genome polyprotein (2301 aa).

A zinc finger lies at 3–14 (CKHGYPDVCPIC). The segment at 30–46 (DGEWFPTDLLCVDLDDD) is acidic. A theilo region spans residues 60–73 (MEWTDLPLVRDIVM). Residue glycine 77 is the site of N-myristoyl glycine; by host attachment. The cysteines at positions 501 and 503 are disulfide-linked. The interval 1039 to 1045 (YYKQRLI) is host EIF4E binding. The region spanning 1281–1446 (IPLASLCEKF…CTTSNGMLDI (166 aa)) is the SF3 helicase domain. 1310–1317 (GAAGQGKS) contacts ATP. Position 1606 is an O-(5'-phospho-RNA)-tyrosine (tyrosine 1606). The Peptidase C3 domain maps to 1634-1827 (NPVMDFELFC…AATIITRELI (194 aa)). Residues histidine 1678, aspartate 1712, and cysteine 1791 each act as for protease 3C activity in the active site. In terms of domain architecture, RdRp catalytic spans 2069-2187 (NYVYDVDYSN…GTNYQIDFNL (119 aa)). Active-site for RdRp activity residues include aspartate 2075 and aspartate 2173.

This sequence belongs to the picornaviruses polyprotein family. As to quaternary structure, interacts with host EIF4E. Interacts with the leader protein. Interacts with host RAN; the complex L-RAN recruits cellular kinases responsible for the L-induced nucleocytoplasmic trafficking inhibition. The complex L-RAN can further bind to the host exportins XPO1/CRM1 and CSE1L/CAS. Interacts with the protein 2A. Interacts with host RNASEL; this interaction prevents RNASEL activation by its substrate 2'-5' oligoadenylates. Phosphorylated. Post-translationally, specific enzymatic cleavages by the viral protease in vivo yield a variety of precursors and mature proteins. The polyprotein seems to be cotranslationally cleaved at the 2A/2B junction by a ribosomal skip from one codon to the next without formation of a peptide bond. This process would release the P1-2A peptide from the translational complex. In terms of processing, during virion maturation, immature virions are rendered infectious following cleavage of VP0 into VP4 and VP2. This maturation seems to be an autocatalytic event triggered by the presence of RNA in the capsid and is followed by a conformational change of the particle. Uridylylated by the polymerase and is covalently linked to the 5'-end of genomic RNA. This uridylylated form acts as a nucleotide-peptide primer for the polymerase. Post-translationally, myristoylation is required during RNA encapsidation and formation of the mature virus particle.

It localises to the virion. The protein localises to the host cytoplasm. It is found in the host nucleus. The protein resides in the host nucleolus. Its subcellular location is the host cytoplasmic vesicle membrane. It catalyses the reaction RNA(n) + a ribonucleoside 5'-triphosphate = RNA(n+1) + diphosphate. It carries out the reaction ATP + H2O = ADP + phosphate + H(+). The enzyme catalyses Selective cleavage of Gln-|-Gly bond in the poliovirus polyprotein. In other picornavirus reactions Glu may be substituted for Gln, and Ser or Thr for Gly.. In terms of biological role, forms a complex with host RAN and probably binds to exportins carrying activated MAPK in order to mediate the hyperphosphorylation of host Phe/Gly containing nuclear pore proteins (Nups) resulting in cessation of active nucleocytoplasmic transport. Proteins with NLS signals fail to import, cellular mRNAs fail to export, and some proteins small enough for diffusion are not retained anymore (efflux). The resulting inhibition of cellular protein synthesis serves to ensure maximal viral gene expression and to evade host immune response. The leader protein also inhibits host interferon regulatory factor 3 (IRF3) dimerization, thereby blocking the transcriptional activation of IFN genes. Binds to host RNase L thereby preventing its activation by 2'-5' oligoadenylates in order to counteract the antiviral interferon-inducible OAS/RNase L pathway. Its function is as follows. Forms an icosahedral capsid of pseudo T=3 symmetry with capsid proteins VP2 and VP3. Together they form an icosahedral capsid composed of 60 copies of each VP1, VP2, and VP3, with a diameter of approximately 300 Angstroms. VP4 lies on the inner surface of the protein shell formed by VP1, VP2 and VP3. All the three latter proteins contain a beta-sheet structure called beta-barrel jelly roll. VP1 is situated at the 12 fivefold axes, whereas VP2 and VP3 are located at the quasi-sixfold axes. Functionally, lies on the inner surface of the capsid shell. After binding to the host receptor, the capsid undergoes conformational changes. Capsid protein VP4 is released, capsid protein VP1 N-terminus is externalized, and together, they shape a pore in the host membrane through which the viral genome is translocated into the host cell cytoplasm. After genome has been released, the channel shrinks. VP0 precursor is a component of immature procapsids. In terms of biological role, involved in host translation shutoff by inhibiting cap-dependent mRNA translation. Nuclear localization is required for this function. The resulting inhibition of cellular protein synthesis serves to ensure maximal viral gene expression and to evade host immune response. Inhibits the phosphorylation of the leader protein. Its function is as follows. Affects membrane integrity and causes an increase in membrane permeability. Functionally, associates with and induces structural rearrangements of intracellular membranes. It displays RNA-binding, nucleotide binding and NTPase activities. Serves as membrane anchor via its hydrophobic domain. In terms of biological role, forms a primer, VPg-pU, which is utilized by the polymerase for the initiation of RNA chains. Its function is as follows. Cysteine protease that generates mature viral proteins from the precursor polyprotein. In addition to its proteolytic activity, it binds to viral RNA, and thus influences viral genome replication. RNA and substrate cooperatively bind to the protease. Cleaves host PABP1, this cleavage is important for viral replication. Functionally, replicates the genomic and antigenomic RNAs by recognizing replications specific signals. Performs VPg uridylylation. The sequence is that of Genome polyprotein from Theiler's murine encephalomyelitis virus (strain DA) (TMEV).